Here is a 66-residue protein sequence, read N- to C-terminus: Antitoxin RelB2 (66 aa).

Antitoxin component of a type II toxin-antitoxin (TA) system. Neutralizes the effect of cognate toxin RelE2, but no other RelE or ParE toxin. The sequence is that of Antitoxin RelB2 (relB2) from Caulobacter vibrioides (strain ATCC 19089 / CIP 103742 / CB 15) (Caulobacter crescentus).